Here is a 307-residue protein sequence, read N- to C-terminus: Pseudouridine-5'-phosphate glycosidase (307 aa).

The active-site Proton donor is the glutamate 28. The substrate site is built by lysine 89 and valine 109. Mn(2+) is bound at residue aspartate 141. Position 143–145 (143–145 (SAD)) interacts with substrate. Lysine 162 (nucleophile) is an active-site residue.

It belongs to the pseudouridine-5'-phosphate glycosidase family. In terms of assembly, homotrimer. The cofactor is Mn(2+).

The enzyme catalyses D-ribose 5-phosphate + uracil = psi-UMP + H2O. Its function is as follows. Catalyzes the reversible cleavage of pseudouridine 5'-phosphate (PsiMP) to ribose 5-phosphate and uracil. Functions biologically in the cleavage direction, as part of a pseudouridine degradation pathway. This Alkaliphilus metalliredigens (strain QYMF) protein is Pseudouridine-5'-phosphate glycosidase.